Reading from the N-terminus, the 151-residue chain is Small ribosomal subunit protein uS11 (151 aa).

The segment at 129–151 (IEDVTPVPSDSTRRKGGRRGRRL) is disordered. Positions 142–151 (RKGGRRGRRL) are enriched in basic residues.

Belongs to the universal ribosomal protein uS11 family.

This chain is Small ribosomal subunit protein uS11 (RPS14), found in Procambarus clarkii (Red swamp crayfish).